The following is a 483-amino-acid chain: Regulatory protein ViaA (483 aa).

This sequence belongs to the ViaA family. Homodimer. Interacts with RavA.

Its subcellular location is the cytoplasm. Its function is as follows. Component of the RavA-ViaA chaperone complex, which may act on the membrane to optimize the function of some of the respiratory chains. ViaA stimulates the ATPase activity of RavA. This chain is Regulatory protein ViaA, found in Shigella flexneri serotype 5b (strain 8401).